Consider the following 87-residue polypeptide: Acyl-CoA-binding protein (87 aa).

Ser-2 bears the N-acetylserine mark. The ACB domain maps to Ser-2 to Ile-87. At Lys-8 the chain carries N6-acetyllysine; alternate. Position 8 is an N6-succinyllysine; alternate (Lys-8). An an acyl-CoA-binding site is contributed by Lys-14. Lys-17 bears the N6-succinyllysine mark. Lys-19 is subject to N6-acetyllysine. Tyr-29 is subject to Phosphotyrosine. Residues Tyr-29 to Lys-33, Lys-51, Lys-55, and Tyr-74 each bind an acyl-CoA. At Lys-51 the chain carries N6-acetyllysine. The residue at position 55 (Lys-55) is an N6-acetyllysine; alternate. Residue Lys-55 is modified to N6-succinyllysine; alternate. Lys-55 bears the N6-(2-hydroxyisobutyryl)lysine; alternate mark. At Lys-55 the chain carries N6-malonyllysine; alternate. At Lys-77 the chain carries N6-acetyllysine; alternate. Lys-77 bears the N6-succinyllysine; alternate mark.

Belongs to the ACBP family. As to quaternary structure, monomer.

It localises to the endoplasmic reticulum. The protein resides in the golgi apparatus. Binds medium- and long-chain acyl-CoA esters with very high affinity and may function as an intracellular carrier of acyl-CoA esters. This chain is Acyl-CoA-binding protein (DBI), found in Chaetophractus villosus (South American armadillo).